A 78-amino-acid chain; its full sequence is Small ribosomal subunit protein eS21 (78 aa).

This sequence belongs to the eukaryotic ribosomal protein eS21 family.

The sequence is that of Small ribosomal subunit protein eS21 (rps21) from Dictyostelium discoideum (Social amoeba).